A 105-amino-acid chain; its full sequence is UPF0251 protein AF_0666 (105 aa).

Belongs to the UPF0251 family.

This Archaeoglobus fulgidus (strain ATCC 49558 / DSM 4304 / JCM 9628 / NBRC 100126 / VC-16) protein is UPF0251 protein AF_0666.